An 835-amino-acid polypeptide reads, in one-letter code: Leucine--tRNA ligase (835 aa).

The 'HIGH' region signature appears at 36-46 (PYPSGKIHVGH). Residues 602 to 606 (KMSKS) carry the 'KMSKS' region motif. Lys-605 is an ATP binding site.

It belongs to the class-I aminoacyl-tRNA synthetase family.

It is found in the cytoplasm. It carries out the reaction tRNA(Leu) + L-leucine + ATP = L-leucyl-tRNA(Leu) + AMP + diphosphate. This is Leucine--tRNA ligase from Rickettsia peacockii (strain Rustic).